The sequence spans 161 residues: Lectin-like protein EP153R (161 aa).

The Cytoplasmic segment spans residues 1-30 (MFSNKKYIGLIDKYCEKKILDDSSTIKICY). A helical membrane pass occupies residues 31 to 51 (ILIGILIGTNMITLIYNFIFW). Residues 52–161 (ENYITCNQKD…HVSLLYICSK (110 aa)) are Extracellular-facing. Residues Cys-66 and Cys-77 are joined by a disulfide bond. The tract at residues 66–160 (CPKDWVGYNN…KHVSLLYICS (95 aa)) is lectin-like. Asn-89, Asn-98, Asn-104, Asn-110, Asn-116, Asn-130, and Asn-136 each carry an N-linked (GlcNAc...) asparagine; by host glycan. Cys-94 and Cys-159 form a disulfide bridge.

This sequence belongs to the asfivirus lectin-like protein family. In terms of assembly, homodimer.

The protein resides in the host endoplasmic reticulum membrane. In terms of biological role, down-regulates MHC-I expression by impairing the appropriate configuration or presentation into the plasma membrane of the latter. Participates in viral hemadsorption, which may help viral spread. Reduces the transactivating activity of host TP53, thus inhibiting apoptosis. Non-essential for virus growth in swine macrophage cell cultures. The protein is Lectin-like protein EP153R of African swine fever virus (isolate Tick/Malawi/Lil 20-1/1983) (ASFV).